Here is a 332-residue protein sequence, read N- to C-terminus: Small ribosomal subunit protein uS2 (332 aa).

The protein belongs to the universal ribosomal protein uS2 family.

This is Small ribosomal subunit protein uS2 from Nitrobacter winogradskyi (strain ATCC 25391 / DSM 10237 / CIP 104748 / NCIMB 11846 / Nb-255).